The chain runs to 880 residues: Translation initiation factor IF-2 (880 aa).

Basic and acidic residues-rich tracts occupy residues 180–194 and 202–228; these read QEAA…EAAK and LAEE…DHHI. A disordered region spans residues 180–289; the sequence is QEAATKRKQD…APESMAHGFN (110 aa). Residues 249-262 are compositionally biased toward basic residues; sequence GRRARNKSNAKKRG. The tr-type G domain maps to 380–549; it reads SRAPVVTIMG…LLQAEVLELK (170 aa). A G1 region spans residues 389–396; it reads GHVDHGKT. A GTP-binding site is contributed by 389-396; the sequence is GHVDHGKT. Residues 414-418 form a G2 region; that stretch reads GITQH. Residues 435 to 438 are G3; the sequence is DTPG. GTP is bound by residues 435 to 439 and 489 to 492; these read DTPGH and NKMD. Residues 489–492 form a G4 region; the sequence is NKMD. The G5 stretch occupies residues 525–527; sequence SAK.

The protein belongs to the TRAFAC class translation factor GTPase superfamily. Classic translation factor GTPase family. IF-2 subfamily.

It is found in the cytoplasm. Functionally, one of the essential components for the initiation of protein synthesis. Protects formylmethionyl-tRNA from spontaneous hydrolysis and promotes its binding to the 30S ribosomal subunits. Also involved in the hydrolysis of GTP during the formation of the 70S ribosomal complex. This Shewanella baltica (strain OS223) protein is Translation initiation factor IF-2.